The primary structure comprises 84 residues: Large ribosomal subunit protein bL27 (84 aa).

Positions 1–20 (MAHKKAGGSTRNGRDSNPKY) are disordered.

The protein belongs to the bacterial ribosomal protein bL27 family.

The protein is Large ribosomal subunit protein bL27 of Francisella tularensis subsp. tularensis (strain FSC 198).